A 61-amino-acid chain; its full sequence is Small ribosomal subunit protein uS14 (61 aa).

Residues Cys24, Cys27, Cys40, and Cys43 each coordinate Zn(2+).

The protein belongs to the universal ribosomal protein uS14 family. Zinc-binding uS14 subfamily. As to quaternary structure, part of the 30S ribosomal subunit. Contacts proteins S3 and S10. Requires Zn(2+) as cofactor.

In terms of biological role, binds 16S rRNA, required for the assembly of 30S particles and may also be responsible for determining the conformation of the 16S rRNA at the A site. The sequence is that of Small ribosomal subunit protein uS14 from Deinococcus deserti (strain DSM 17065 / CIP 109153 / LMG 22923 / VCD115).